The sequence spans 146 residues: Hemoglobin subunit beta (146 aa).

The residue at position 1 (valine 1) is an N-acetylvaline. A Globin domain is found at 2-146; it reads HLTGEEKAAV…VANALAHKYH (145 aa). Phosphothreonine is present on threonine 12. Serine 44 is modified (phosphoserine). Lysine 59 is subject to N6-acetyllysine. Residue histidine 63 coordinates heme b. N6-acetyllysine is present on lysine 82. Position 92 (histidine 92) interacts with heme b. Cysteine 93 carries the post-translational modification S-nitrosocysteine. Residue lysine 144 is modified to N6-acetyllysine.

Belongs to the globin family. As to quaternary structure, heterotetramer of two alpha chains and two beta chains. Red blood cells.

Involved in oxygen transport from the lung to the various peripheral tissues. This chain is Hemoglobin subunit beta (HBB), found in Lutra lutra (European river otter).